The sequence spans 256 residues: 5-keto-4-deoxy-D-glucarate aldolase (256 aa).

Residue His-50 is the Proton acceptor of the active site. Gln-151 provides a ligand contact to substrate. Residue Glu-153 coordinates Mg(2+). Residues Ser-178 and Asp-179 each coordinate substrate. Asp-179 lines the Mg(2+) pocket.

Belongs to the HpcH/HpaI aldolase family. KDGluc aldolase subfamily. Homohexamer; trimer of dimers. Requires Mg(2+) as cofactor.

The catalysed reaction is 5-dehydro-4-deoxy-D-glucarate = 2-hydroxy-3-oxopropanoate + pyruvate. It carries out the reaction 2-dehydro-3-deoxy-D-glucarate = 2-hydroxy-3-oxopropanoate + pyruvate. The protein operates within carbohydrate acid metabolism; galactarate degradation; D-glycerate from galactarate: step 2/3. In terms of biological role, catalyzes the reversible retro-aldol cleavage of both 5-keto-4-deoxy-D-glucarate and 2-keto-3-deoxy-D-glucarate to pyruvate and tartronic semialdehyde. This Shigella boydii serotype 4 (strain Sb227) protein is 5-keto-4-deoxy-D-glucarate aldolase.